The following is a 780-amino-acid chain: ATP-dependent 6-phosphofructokinase, muscle type (780 aa).

The residue at position 2 (threonine 2) is an N-acetylthreonine. Positions 2–390 (THEEHHAAKT…NWEVYKLLAH (389 aa)) are N-terminal catalytic PFK domain 1. ATP-binding positions include glycine 25, 88-89 (RC), and 118-121 (GDGS). Aspartate 119 lines the Mg(2+) pocket. Serine 133 bears the Phosphoserine mark. Substrate-binding positions include 164–166 (SID), arginine 201, 208–210 (MGR), glutamate 264, arginine 292, and 298–301 (HVQR). The active-site Proton acceptor is the aspartate 166. Serine 377 is modified (phosphoserine). Positions 391–401 (VRPPVSKSGSH) are interdomain linker. Positions 402–780 (TVAVMNVGAP…TRKRSGEGAV (379 aa)) are C-terminal regulatory PFK domain 2. Beta-D-fructose 2,6-bisphosphate is bound by residues arginine 471 and 528–532 (TVSNN). O-linked (GlcNAc) serine glycosylation is present at serine 530. At lysine 557 the chain carries N6-(2-hydroxyisobutyryl)lysine. Residues arginine 566, 573 to 575 (MGG), glutamate 629, arginine 655, and 661 to 664 (HMQQ) contribute to the beta-D-fructose 2,6-bisphosphate site. Serine 667 is subject to Phosphoserine. Arginine 735 contributes to the beta-D-fructose 2,6-bisphosphate binding site. A Phosphoserine modification is found at serine 775.

It belongs to the phosphofructokinase type A (PFKA) family. ATP-dependent PFK group I subfamily. Eukaryotic two domain clade 'E' sub-subfamily. As to quaternary structure, homo- and heterotetramers. Phosphofructokinase (PFK) enzyme functions as a tetramer composed of different combinations of 3 types of subunits, called PFKM (M), PFKL (L) and PFKP (P). The composition of the PFK tetramer differs according to the tissue type it is present in. The kinetic and regulatory properties of the tetrameric enzyme are dependent on the subunit composition, hence can vary across tissues. Interacts (via C-terminus) with HK1 (via N-terminal spermatogenic cell-specific region). It depends on Mg(2+) as a cofactor. Post-translationally, glcNAcylation decreases enzyme activity.

Its subcellular location is the cytoplasm. The catalysed reaction is beta-D-fructose 6-phosphate + ATP = beta-D-fructose 1,6-bisphosphate + ADP + H(+). The protein operates within carbohydrate degradation; glycolysis; D-glyceraldehyde 3-phosphate and glycerone phosphate from D-glucose: step 3/4. Its activity is regulated as follows. Allosterically activated by ADP, AMP, or fructose 2,6-bisphosphate, and allosterically inhibited by ATP or citrate. Its function is as follows. Catalyzes the phosphorylation of D-fructose 6-phosphate to fructose 1,6-bisphosphate by ATP, the first committing step of glycolysis. The chain is ATP-dependent 6-phosphofructokinase, muscle type (PFKM) from Macaca fascicularis (Crab-eating macaque).